The following is a 533-amino-acid chain: Non-specific phospholipase C1 (533 aa).

The first 22 residues, M1 to S22, serve as a signal peptide directing secretion.

The protein belongs to the bacterial phospholipase C family. Expressed in roots, leaves, stems, flowers and siliques.

It localises to the secreted. The chain is Non-specific phospholipase C1 (NPC1) from Arabidopsis thaliana (Mouse-ear cress).